A 64-amino-acid polypeptide reads, in one-letter code: UPF0434 protein Bmul_0750/BMULJ_02510 (64 aa).

The protein belongs to the UPF0434 family.

The chain is UPF0434 protein Bmul_0750/BMULJ_02510 from Burkholderia multivorans (strain ATCC 17616 / 249).